The chain runs to 660 residues: Polyadenylate-binding protein 3 (660 aa).

4 consecutive RRM domains span residues 49 to 126 (SSLY…LSNR), 136 to 213 (GNIF…HFIR), 229 to 306 (TNVY…RAQK), and 332 to 409 (ANLY…LAQR). The PABC domain maps to 571–648 (PISKLTSSLA…ALDVLRLSVD (78 aa)).

The protein belongs to the polyadenylate-binding protein type-1 family. In terms of tissue distribution, expressed predominantly in immature flowers. Detected in tapetum and pollen. Strongly expressed in immatures siliques.

It localises to the cytoplasm. The protein localises to the nucleus. Its function is as follows. Binds the poly(A) tail of mRNA. Appears to be an important mediator of the multiple roles of the poly(A) tail in mRNA biogenesis, stability and translation. In the cytoplasm, affects both translation and mRNA decay. Inhibits the polyadenylated RNA degradation by the Rrp41p 3'--&gt;5' exonuclease in vitro. Binds with the 5'UTRs of PAB2, PAB3 and with a lower affinity with the 5'UTR of PAB5. The polypeptide is Polyadenylate-binding protein 3 (PAB3) (Arabidopsis thaliana (Mouse-ear cress)).